We begin with the raw amino-acid sequence, 435 residues long: Histidinol dehydrogenase (435 aa).

NAD(+) is bound by residues Y131, Q189, and N212. Residues S238, Q260, and H263 each coordinate substrate. Residues Q260 and H263 each coordinate Zn(2+). Active-site proton acceptor residues include E327 and H328. The substrate site is built by H328, D361, E415, and H420. A Zn(2+)-binding site is contributed by D361. H420 is a binding site for Zn(2+).

It belongs to the histidinol dehydrogenase family. Homodimer. The cofactor is Zn(2+).

The enzyme catalyses L-histidinol + 2 NAD(+) + H2O = L-histidine + 2 NADH + 3 H(+). It functions in the pathway amino-acid biosynthesis; L-histidine biosynthesis; L-histidine from 5-phospho-alpha-D-ribose 1-diphosphate: step 9/9. In terms of biological role, catalyzes the sequential NAD-dependent oxidations of L-histidinol to L-histidinaldehyde and then to L-histidine. The sequence is that of Histidinol dehydrogenase from Buchnera aphidicola subsp. Baizongia pistaciae (strain Bp).